The primary structure comprises 204 residues: Peptide deformylase (204 aa).

Fe cation contacts are provided by C131 and H174. The active site involves E175. Position 178 (H178) interacts with Fe cation.

Belongs to the polypeptide deformylase family. Fe(2+) is required as a cofactor.

It catalyses the reaction N-terminal N-formyl-L-methionyl-[peptide] + H2O = N-terminal L-methionyl-[peptide] + formate. Removes the formyl group from the N-terminal Met of newly synthesized proteins. Requires at least a dipeptide for an efficient rate of reaction. N-terminal L-methionine is a prerequisite for activity but the enzyme has broad specificity at other positions. In Streptococcus pyogenes serotype M18 (strain MGAS8232), this protein is Peptide deformylase.